The sequence spans 327 residues: MFNDIPVFDYEDIQLIPNKCIITSRSQADTSVTLGKYQFKLPVIPANMQTIIDETIAEQLAKEGYFYIMHRFDEDSRKPFIKRMHEQGLIASISVGVKAYEYEFVTSLKEDTPEFITIDIAHGHANSVIDMIKHIKTELPETFVIAGNVGTPEAVRELENAGADATKVGIGPGKVCITKVKTGFGTGGWQLAALRWCAKAARKSIIADGGIRTHGDIAKSIRFGASMVMIGSLFAGHIESPGKTVEVDGETFKEYYGSASEYQKGEHKNVEGKKILLPTKGHLSDTLTEMQQDLQSSISYAGGKDLDSLRHVDYVIVKNSIWNGDSI.

C176 acts as the Thioimidate intermediate in catalysis. 205 to 228 (IIADGGIRTHGDIAKSIRFGASMV) contacts NADP(+).

The protein belongs to the IMPDH/GMPR family. GuaC type 2 subfamily.

It carries out the reaction IMP + NH4(+) + NADP(+) = GMP + NADPH + 2 H(+). Functionally, catalyzes the irreversible NADPH-dependent deamination of GMP to IMP. It functions in the conversion of nucleobase, nucleoside and nucleotide derivatives of G to A nucleotides, and in maintaining the intracellular balance of A and G nucleotides. The chain is GMP reductase from Streptococcus pyogenes serotype M5 (strain Manfredo).